Here is a 161-residue protein sequence, read N- to C-terminus: Probable chemoreceptor glutamine deamidase CheD (161 aa).

The protein belongs to the CheD family.

It carries out the reaction L-glutaminyl-[protein] + H2O = L-glutamyl-[protein] + NH4(+). In terms of biological role, probably deamidates glutamine residues to glutamate on methyl-accepting chemotaxis receptors (MCPs), playing an important role in chemotaxis. The protein is Probable chemoreceptor glutamine deamidase CheD of Syntrophomonas wolfei subsp. wolfei (strain DSM 2245B / Goettingen).